The following is a 353-amino-acid chain: GTPase Obg (353 aa).

The 159-residue stretch at 1–159 (MKFLDEAKVY…RWIWLRLKLI (159 aa)) folds into the Obg domain. One can recognise an OBG-type G domain in the interval 160–327 (ADAGLVGLPN…ALRALVAVIG (168 aa)). GTP is bound by residues 166 to 173 (GLPNAGKS), 191 to 195 (FTTLH), 212 to 215 (DIPG), 279 to 282 (NKID), and 308 to 310 (SGV). Mg(2+) is bound by residues serine 173 and threonine 193.

The protein belongs to the TRAFAC class OBG-HflX-like GTPase superfamily. OBG GTPase family. Monomer. Mg(2+) is required as a cofactor.

It localises to the cytoplasm. Its function is as follows. An essential GTPase which binds GTP, GDP and possibly (p)ppGpp with moderate affinity, with high nucleotide exchange rates and a fairly low GTP hydrolysis rate. Plays a role in control of the cell cycle, stress response, ribosome biogenesis and in those bacteria that undergo differentiation, in morphogenesis control. This Rhodopseudomonas palustris (strain ATCC BAA-98 / CGA009) protein is GTPase Obg.